The chain runs to 130 residues: Small ribosomal subunit protein uS9 (130 aa).

The tract at residues 109–130 (RMKERKKYGLKGARRAPQFSKR) is disordered. A compositionally biased stretch (basic residues) spans 111–130 (KERKKYGLKGARRAPQFSKR).

Belongs to the universal ribosomal protein uS9 family.

The chain is Small ribosomal subunit protein uS9 from Listeria innocua serovar 6a (strain ATCC BAA-680 / CLIP 11262).